Here is a 273-residue protein sequence, read N- to C-terminus: MSNPVVLNLHLISDSTCETVAAVARSALEHFKSVEVNEFVWSCINSYEQIDKIMLTIEKDKYNFIMYTMFDDDIRKYLKQKAGIHEIPCIPILSHVIREISCYLNIKKDPYINTSIGLDDEYFTRIDAINYTIAHDDGQNLWDIDQADIIILGVSRTSKSPTSIYLAYRGYRVVNIPLINSIELSVDLSKMKNKLIVGLTIDIDRLIEIRRARLVSMKNQNNYGYVDYEHVLMEIRETKKICAKNGWPIIDVTQKSVEEIAATIIQYFTKMQH.

Position 153-160 (153-160) interacts with ADP; it reads GVSRTSKS.

The protein belongs to the pyruvate, phosphate/water dikinase regulatory protein family. PDRP subfamily.

The enzyme catalyses N(tele)-phospho-L-histidyl/L-threonyl-[pyruvate, phosphate dikinase] + ADP = N(tele)-phospho-L-histidyl/O-phospho-L-threonyl-[pyruvate, phosphate dikinase] + AMP + H(+). It catalyses the reaction N(tele)-phospho-L-histidyl/O-phospho-L-threonyl-[pyruvate, phosphate dikinase] + phosphate + H(+) = N(tele)-phospho-L-histidyl/L-threonyl-[pyruvate, phosphate dikinase] + diphosphate. Its function is as follows. Bifunctional serine/threonine kinase and phosphorylase involved in the regulation of the pyruvate, phosphate dikinase (PPDK) by catalyzing its phosphorylation/dephosphorylation. The protein is Putative pyruvate, phosphate dikinase regulatory protein of Ehrlichia ruminantium (strain Welgevonden).